A 262-amino-acid chain; its full sequence is tRNA (guanine-N(1)-)-methyltransferase (262 aa).

Residues glycine 113 and 137–142 (IGDYVL) contribute to the S-adenosyl-L-methionine site.

The protein belongs to the RNA methyltransferase TrmD family. As to quaternary structure, homodimer.

The protein localises to the cytoplasm. The enzyme catalyses guanosine(37) in tRNA + S-adenosyl-L-methionine = N(1)-methylguanosine(37) in tRNA + S-adenosyl-L-homocysteine + H(+). Specifically methylates guanosine-37 in various tRNAs. The polypeptide is tRNA (guanine-N(1)-)-methyltransferase (Thermobifida fusca (strain YX)).